A 227-amino-acid chain; its full sequence is 7-cyano-7-deazaguanine synthase (227 aa).

7–17 (VSGGMDSLVAT) is a binding site for ATP. The Zn(2+) site is built by Cys-187, Cys-195, Cys-198, and Cys-201.

Belongs to the QueC family. It depends on Zn(2+) as a cofactor.

It carries out the reaction 7-carboxy-7-deazaguanine + NH4(+) + ATP = 7-cyano-7-deazaguanine + ADP + phosphate + H2O + H(+). Its pathway is purine metabolism; 7-cyano-7-deazaguanine biosynthesis. Catalyzes the ATP-dependent conversion of 7-carboxy-7-deazaguanine (CDG) to 7-cyano-7-deazaguanine (preQ(0)). This is 7-cyano-7-deazaguanine synthase from Chlorobaculum tepidum (strain ATCC 49652 / DSM 12025 / NBRC 103806 / TLS) (Chlorobium tepidum).